A 736-amino-acid polypeptide reads, in one-letter code: Cytosolic neutral trehalase (736 aa).

The disordered stretch occupies residues 1–47 (MSEAPQARRVGSVDDHSVYDDAKTYYTSEERHNNSRSGPRQRTYSQN). Positions 11 to 33 (GSVDDHSVYDDAKTYYTSEERHN) are enriched in basic and acidic residues. The span at 35 to 47 (SRSGPRQRTYSQN) shows a compositional bias: polar residues. Positions 92, 94, 96, 98, and 103 each coordinate Ca(2+). Residues Arg279, 286–287 (WD), Asn323, 332–334 (RSQ), Glu399, Arg448, and Gly451 each bind substrate. Catalysis depends on proton donor/acceptor residues Asp453 and Glu657.

The protein belongs to the glycosyl hydrolase 37 family. The cofactor is Ca(2+).

The protein localises to the cytoplasm. The enzyme catalyses alpha,alpha-trehalose + H2O = alpha-D-glucose + beta-D-glucose. It participates in carbohydrate degradation. Functionally, hydrolyzes intracellular trehalose to glucose. Plays a role in pathogenicity, specifically in proliferation of invasive hyphae in rice blast disease. The sequence is that of Cytosolic neutral trehalase (NTH1) from Pyricularia oryzae (strain 70-15 / ATCC MYA-4617 / FGSC 8958) (Rice blast fungus).